The primary structure comprises 253 residues: Methionine aminopeptidase (253 aa).

H78 contacts substrate. D95, D106, and H169 together coordinate a divalent metal cation. Position 176 (H176) interacts with substrate. E206 and E237 together coordinate a divalent metal cation.

It belongs to the peptidase M24A family. Methionine aminopeptidase type 1 subfamily. Monomer. Co(2+) serves as cofactor. Requires Zn(2+) as cofactor. Mn(2+) is required as a cofactor. It depends on Fe(2+) as a cofactor.

The enzyme catalyses Release of N-terminal amino acids, preferentially methionine, from peptides and arylamides.. In terms of biological role, removes the N-terminal methionine from nascent proteins. The N-terminal methionine is often cleaved when the second residue in the primary sequence is small and uncharged (Met-Ala-, Cys, Gly, Pro, Ser, Thr, or Val). Requires deformylation of the N(alpha)-formylated initiator methionine before it can be hydrolyzed. The chain is Methionine aminopeptidase from Helicobacter pylori (strain J99 / ATCC 700824) (Campylobacter pylori J99).